The sequence spans 127 residues: Small ribosomal subunit protein bS6 (127 aa).

The disordered stretch occupies residues proline 99–serine 127. Low complexity predominate over residues serine 109 to serine 127.

The protein belongs to the bacterial ribosomal protein bS6 family.

In terms of biological role, binds together with bS18 to 16S ribosomal RNA. The polypeptide is Small ribosomal subunit protein bS6 (Parasynechococcus marenigrum (strain WH8102)).